A 557-amino-acid polypeptide reads, in one-letter code: Estrogen receptor beta (557 aa).

The modulating stretch occupies residues 1–154 (MMAAASSPEK…SSGGKADLHY (154 aa)). 2 consecutive NR C4-type zinc fingers follow at residues 155 to 175 (CAVC…CEGC) and 191 to 215 (CPAT…LRKC). Residues 155–220 (CAVCHDYASG…RLRKCYEVGM (66 aa)) constitute a DNA-binding region (nuclear receptor). The disordered stretch occupies residues 240–268 (LTRLSSQGKTAEPKGITGPAEGSLNKPEK). Residues 272 to 508 (TPEQLIERIL…DLLLEMLDAH (237 aa)) enclose the NR LBD domain. Positions 513-557 (SCLPHQPPQQDSKDQSEVPAPLHSSAGGPSNTWTPSSARAGGESQ) are disordered. Positions 539 to 557 (GGPSNTWTPSSARAGGESQ) are enriched in polar residues.

This sequence belongs to the nuclear hormone receptor family. NR3 subfamily. Binds DNA as a homodimer. Can form a heterodimer with ER-alpha.

Its subcellular location is the nucleus. Its function is as follows. Binds estrogens with an affinity similar to that of ER-alpha, and activates expression of reporter genes containing estrogen response elements (ERE) in an estrogen-dependent manner. The polypeptide is Estrogen receptor beta (esr2) (Oreochromis niloticus (Nile tilapia)).